The following is a 273-amino-acid chain: Putative phosphoenolpyruvate synthase regulatory protein (273 aa).

154–161 (GVSRSGKT) serves as a coordination point for ADP.

It belongs to the pyruvate, phosphate/water dikinase regulatory protein family. PSRP subfamily.

The catalysed reaction is [pyruvate, water dikinase] + ADP = [pyruvate, water dikinase]-phosphate + AMP + H(+). It catalyses the reaction [pyruvate, water dikinase]-phosphate + phosphate + H(+) = [pyruvate, water dikinase] + diphosphate. Its function is as follows. Bifunctional serine/threonine kinase and phosphorylase involved in the regulation of the phosphoenolpyruvate synthase (PEPS) by catalyzing its phosphorylation/dephosphorylation. The polypeptide is Putative phosphoenolpyruvate synthase regulatory protein (Halorhodospira halophila (strain DSM 244 / SL1) (Ectothiorhodospira halophila (strain DSM 244 / SL1))).